Consider the following 422-residue polypeptide: Replication factor C large subunit (422 aa).

Position 63-70 (63-70 (GPPGIGKT)) interacts with ATP.

The protein belongs to the activator 1 small subunits family. RfcL subfamily. As to quaternary structure, heteromultimer composed of small subunits (RfcS) and large subunits (RfcL).

Part of the RFC clamp loader complex which loads the PCNA sliding clamp onto DNA. The polypeptide is Replication factor C large subunit (Pyrobaculum neutrophilum (strain DSM 2338 / JCM 9278 / NBRC 100436 / V24Sta) (Thermoproteus neutrophilus)).